The sequence spans 380 residues: Hydrogenase maturation factor HypD2 (380 aa).

Cys-36, Cys-64, and Cys-67 together coordinate Fe cation.

Belongs to the HypD family. Requires [4Fe-4S] cluster as cofactor.

It participates in protein modification; [NiFe] hydrogenase maturation. Functionally, involved in the maturation of [NiFe] hydrogenases. Involved in the biosynthesis of the Fe(CN)(2)CO cofactor. The sequence is that of Hydrogenase maturation factor HypD2 (hypD2) from Bradyrhizobium diazoefficiens (strain JCM 10833 / BCRC 13528 / IAM 13628 / NBRC 14792 / USDA 110).